The sequence spans 121 residues: Small ribosomal subunit protein uS13 (121 aa).

The segment at 92-121 is disordered; it reads RKGLPMRGQRTRTNARTRKGPRRAAQALKK.

Belongs to the universal ribosomal protein uS13 family. As to quaternary structure, part of the 30S ribosomal subunit. Forms a loose heterodimer with protein S19. Forms two bridges to the 50S subunit in the 70S ribosome.

Located at the top of the head of the 30S subunit, it contacts several helices of the 16S rRNA. In the 70S ribosome it contacts the 23S rRNA (bridge B1a) and protein L5 of the 50S subunit (bridge B1b), connecting the 2 subunits; these bridges are implicated in subunit movement. Contacts the tRNAs in the A and P-sites. This chain is Small ribosomal subunit protein uS13, found in Burkholderia cenocepacia (strain ATCC BAA-245 / DSM 16553 / LMG 16656 / NCTC 13227 / J2315 / CF5610) (Burkholderia cepacia (strain J2315)).